A 161-amino-acid polypeptide reads, in one-letter code: Peptidyl-prolyl cis-trans isomerase-like 3 (161 aa).

S2 carries the N-acetylserine modification. In terms of domain architecture, PPIase cyclophilin-type spans 2 to 154; it reads SVTLHTDVGD…NDVHIKDITI (153 aa). Residue R61 is modified to Omega-N-methylarginine.

This sequence belongs to the cyclophilin-type PPIase family. PPIL3 subfamily. Identified in the spliceosome C complex. Ubiquitous. Detected at low levels.

It carries out the reaction [protein]-peptidylproline (omega=180) = [protein]-peptidylproline (omega=0). Functionally, PPIases accelerate the folding of proteins. It catalyzes the cis-trans isomerization of proline imidic peptide bonds in oligopeptides. May be involved in pre-mRNA splicing. This is Peptidyl-prolyl cis-trans isomerase-like 3 (PPIL3) from Homo sapiens (Human).